Consider the following 177-residue polypeptide: Large ribosomal subunit protein uL6 (177 aa).

Belongs to the universal ribosomal protein uL6 family. As to quaternary structure, part of the 50S ribosomal subunit.

Functionally, this protein binds to the 23S rRNA, and is important in its secondary structure. It is located near the subunit interface in the base of the L7/L12 stalk, and near the tRNA binding site of the peptidyltransferase center. This Psychromonas ingrahamii (strain DSM 17664 / CCUG 51855 / 37) protein is Large ribosomal subunit protein uL6.